A 466-amino-acid chain; its full sequence is Phytase A (466 aa).

A signal peptide spans 1 to 19; that stretch reads MGVFVVLLSIATLFGSTSG. An N-linked (GlcNAc...) asparagine glycan is attached at asparagine 27. The cysteines at positions 31 and 40 are disulfide-linked. 1D-myo-inositol hexakisphosphate-binding residues include tyrosine 51, arginine 81, histidine 82, arginine 85, and threonine 88. 4 disulfide bridges follow: cysteine 71–cysteine 414, cysteine 215–cysteine 465, cysteine 264–cysteine 282, and cysteine 436–cysteine 444. The active-site Nucleophile is histidine 82. 2 N-linked (GlcNAc...) asparagine glycosylation sites follow: asparagine 105 and asparagine 120. Residue arginine 165 coordinates 1D-myo-inositol hexakisphosphate. N-linked (GlcNAc...) asparagine glycans are attached at residues asparagine 207 and asparagine 230. Position 301 (lysine 301) interacts with 1D-myo-inositol hexakisphosphate. N-linked (GlcNAc...) asparagine glycans are attached at residues asparagine 339 and asparagine 352. Residues histidine 361 and aspartate 362 each coordinate 1D-myo-inositol hexakisphosphate. Asparagine 376 carries N-linked (GlcNAc...) asparagine glycosylation.

It belongs to the histidine acid phosphatase family. In terms of assembly, monomer.

The protein localises to the secreted. The catalysed reaction is 1D-myo-inositol hexakisphosphate + H2O = 1D-myo-inositol 1,2,4,5,6-pentakisphosphate + phosphate. The enzyme catalyses 1D-myo-inositol 1,2,4,5,6-pentakisphosphate + H2O = 1D-myo-inositol 1,2,5,6-tetrakisphosphate + phosphate. It catalyses the reaction 1D-myo-inositol 1,2,5,6-tetrakisphosphate + H2O = 1D-myo-inositol 1,2,6-trisphosphate + phosphate. It carries out the reaction 1D-myo-inositol 1,2,6-trisphosphate + H2O = 1D-myo-inositol 1,2-bisphosphate + phosphate. The catalysed reaction is 1D-myo-inositol 1,2-bisphosphate + H2O = 1D-myo-inositol 2-phosphate + phosphate. In terms of biological role, catalyzes the phosphate monoester hydrolysis of phytic acid (myo-inositol hexakisphosphate), which results in the stepwise formation of myo-inositol pentakis-, tetrakis-, tris-, bis-, and monophosphates, as well as the liberation of inorganic phosphate. Myo-inositol 2-monophosphate is the end product. Has a broad substrate specificity and is also able to dephosphorylate other classic acid phosphatase substrates such as p-nitrophenyl phosphate, phenyl phosphate, fructose 1,6-bisphosphate, glucose 6-phosphate, 3-phosphoglycerate, as well as ADP and ATP. The protein is Phytase A of Aspergillus terreus.